We begin with the raw amino-acid sequence, 325 residues long: Histone-lysine N-methyltransferase ATXR4 (325 aa).

A signal peptide spans 1-30 (MSRLALNRYSRCFSRLKTLTTPLFFSSSAA). Positions 42–295 (PPIRVGLTES…EGEELRICYI (254 aa)) constitute an SET domain.

This sequence belongs to the class V-like SAM-binding methyltransferase superfamily. Histone-lysine methyltransferase family. TRX/MLL subfamily.

Its subcellular location is the nucleus. It carries out the reaction L-lysyl-[histone] + S-adenosyl-L-methionine = N(6)-methyl-L-lysyl-[histone] + S-adenosyl-L-homocysteine + H(+). Its function is as follows. Histone methyltransferase. In Arabidopsis thaliana (Mouse-ear cress), this protein is Histone-lysine N-methyltransferase ATXR4 (ATXR4).